Consider the following 604-residue polypeptide: Nuclear factor erythroid 2-related factor 2 (604 aa).

The DLG motif signature appears at 29–31 (DLG). Position 40 is a phosphoserine; by PKC (S40). Positions 79–82 (ETGE) match the ETGE motif motif. Residue S214 is modified to Phosphoserine. Positions 334–447 (TVEFNDSDSG…VPFTKDKHSS (114 aa)) are disordered. Polar residues-rich tracts occupy residues 340 to 352 (SDSGISLNTSPSR) and 395 to 407 (PTHSSGDTVQPLS). Residues K461, K471, and K486 are each glycosylated (N-linked (Glc) (glycation) lysine). Residues 496 to 559 (LIRDIRRRGK…HLLKRKLSTL (64 aa)) form the bZIP domain. Residue R498 is glycosylated (N-linked (Glc) (glycation) arginine). Positions 498-517 (RDIRRRGKNKVAAQNCRKRK) are basic motif. Residues 521-528 (IVELEQDL) form a leucine-zipper region. R568 carries N-linked (Glc) (glycation) arginine glycosylation. The interval 570-604 (EDGKPYSPSEYSLQQTRDGNVFLVPKSKKPDTKKN) is disordered. N-linked (Glc) (glycation) lysine glycosylation occurs at K573. Positions 578 to 587 (SEYSLQQTRD) are enriched in polar residues. Residues 590 to 595 (VFLVPK) form a mediates interaction with CHD6 and is necessary to activate transcription region. N6-acetyllysine; by CREBBP occurs at positions 595 and 598.

This sequence belongs to the bZIP family. CNC subfamily. In terms of assembly, heterodimer; heterodimerizes with small Maf proteins. Interacts (via the bZIP domain) with MAFG and MAFK; required for binding to antioxidant response elements (AREs) on DNA. Interacts with KEAP1; the interaction is direct and promotes ubiquitination by the BCR(KEAP1) E3 ubiquitin ligase complex. Forms a ternary complex with PGAM5 and KEAP1. Interacts with EEF1D at heat shock promoter elements (HSE). Interacts via its leucine-zipper domain with the coiled-coil domain of PMF1. Interacts with CHD6; involved in activation of the transcription. Interacts with ESRRB; represses NFE2L2 transcriptional activity. Interacts with MOTS-c, a peptide produced by the mitochondrially encoded 12S rRNA MT-RNR1; the interaction occurs in the nucleus following metabolic stress. Ubiquitinated in the cytoplasm by the BCR(KEAP1) E3 ubiquitin ligase complex leading to its degradation. In response to oxidative stress, electrophile metabolites, such as sulforaphane, modify KEAP1, leading to inhibit activity of the BCR(KEAP1) complex, promoting NFE2L2/NRF2 nuclear accumulation and activity. In response to autophagy, the BCR(KEAP1) complex is inactivated. Post-translationally, phosphorylated by EIF2AK3/PERK following unfolded protein response (UPR), promoting dissociation from its cytoplasmic inhibitor KEAP1, followed by its translocation into the nucleus. Phosphorylation of Ser-40 by PKC in response to oxidative stress dissociates NFE2L2 from its cytoplasmic inhibitor KEAP1, promoting its translocation into the nucleus. In terms of processing, acetylation at Lys-595 and Lys-598 increases nuclear localization whereas deacetylation by SIRT1 enhances cytoplasmic presence. Glycation impairs transcription factor activity by preventing heterodimerization with small Maf proteins. Deglycation by FN3K restores activity.

It localises to the cytoplasm. The protein resides in the cytosol. It is found in the nucleus. Transcription factor that plays a key role in the response to oxidative stress: binds to antioxidant response (ARE) elements present in the promoter region of many cytoprotective genes, such as phase 2 detoxifying enzymes, and promotes their expression, thereby neutralizing reactive electrophiles. In normal conditions, ubiquitinated and degraded in the cytoplasm by the BCR(KEAP1) complex. In response to oxidative stress, electrophile metabolites inhibit activity of the BCR(KEAP1) complex, promoting nuclear accumulation of NFE2L2/NRF2, heterodimerization with one of the small Maf proteins and binding to ARE elements of cytoprotective target genes. The NFE2L2/NRF2 pathway is also activated in response to selective autophagy: autophagy promotes interaction between KEAP1 and SQSTM1/p62 and subsequent inactivation of the BCR(KEAP1) complex, leading to NFE2L2/NRF2 nuclear accumulation and expression of cytoprotective genes. The NFE2L2/NRF2 pathway is also activated during the unfolded protein response (UPR), contributing to redox homeostasis and cell survival following endoplasmic reticulum stress. May also be involved in the transcriptional activation of genes of the beta-globin cluster by mediating enhancer activity of hypersensitive site 2 of the beta-globin locus control region. Also plays an important role in the regulation of the innate immune response. It is a critical regulator of the innate immune response and survival during sepsis by maintaining redox homeostasis and restraint of the dysregulation of pro-inflammatory signaling pathways like MyD88-dependent and -independent and TNF-alpha signaling. Suppresses macrophage inflammatory response by blocking pro-inflammatory cytokine transcription and the induction of IL6. Binds to the proximity of pro-inflammatory genes in macrophages and inhibits RNA Pol II recruitment. The inhibition is independent of the Nrf2-binding motif and reactive oxygen species level. Represses antiviral cytosolic DNA sensing by suppressing the expression of the adapter protein STING1 and decreasing responsiveness to STING1 agonists while increasing susceptibility to infection with DNA viruses. In Rattus norvegicus (Rat), this protein is Nuclear factor erythroid 2-related factor 2.